The sequence spans 178 residues: Peptide methionine sulfoxide reductase MsrA (178 aa).

Cys-14 is an active-site residue.

This sequence belongs to the MsrA Met sulfoxide reductase family.

It catalyses the reaction L-methionyl-[protein] + [thioredoxin]-disulfide + H2O = L-methionyl-(S)-S-oxide-[protein] + [thioredoxin]-dithiol. The enzyme catalyses [thioredoxin]-disulfide + L-methionine + H2O = L-methionine (S)-S-oxide + [thioredoxin]-dithiol. Functionally, has an important function as a repair enzyme for proteins that have been inactivated by oxidation. Catalyzes the reversible oxidation-reduction of methionine sulfoxide in proteins to methionine. This is Peptide methionine sulfoxide reductase MsrA from Bacillus pumilus (strain SAFR-032).